The following is a 228-amino-acid chain: UPF0758 protein stu1465 (228 aa).

Residues 103–225 form the MPN domain; that stretch reads QIMSSQQVAR…YYSFREERED (123 aa). Residues H174, H176, and D187 each coordinate Zn(2+). Residues 174-187 carry the JAMM motif motif; it reads HNHPSGEAYPSRND.

It belongs to the UPF0758 family.

The polypeptide is UPF0758 protein stu1465 (Streptococcus thermophilus (strain ATCC BAA-250 / LMG 18311)).